A 114-amino-acid chain; its full sequence is Small ribosomal subunit protein bS6 (114 aa).

It belongs to the bacterial ribosomal protein bS6 family.

Binds together with bS18 to 16S ribosomal RNA. The chain is Small ribosomal subunit protein bS6 from Bacteroides thetaiotaomicron (strain ATCC 29148 / DSM 2079 / JCM 5827 / CCUG 10774 / NCTC 10582 / VPI-5482 / E50).